Consider the following 438-residue polypeptide: UDP-N-acetylmuramoylalanine--D-glutamate ligase (438 aa).

112–118 (GSNGKST) is a binding site for ATP.

The protein belongs to the MurCDEF family.

The protein resides in the cytoplasm. It catalyses the reaction UDP-N-acetyl-alpha-D-muramoyl-L-alanine + D-glutamate + ATP = UDP-N-acetyl-alpha-D-muramoyl-L-alanyl-D-glutamate + ADP + phosphate + H(+). Its pathway is cell wall biogenesis; peptidoglycan biosynthesis. Its function is as follows. Cell wall formation. Catalyzes the addition of glutamate to the nucleotide precursor UDP-N-acetylmuramoyl-L-alanine (UMA). This is UDP-N-acetylmuramoylalanine--D-glutamate ligase from Sodalis glossinidius (strain morsitans).